A 123-amino-acid chain; its full sequence is Small ribosomal subunit protein uS12 (123 aa).

The tract at residues 1-28 (MPTIQQLIRKPRQPKVKRSKSQHLEQCP) is disordered. The segment covering 9-21 (RKPRQPKVKRSKS) has biased composition (basic residues). Aspartate 89 carries the post-translational modification 3-methylthioaspartic acid.

This sequence belongs to the universal ribosomal protein uS12 family. Part of the 30S ribosomal subunit. Contacts proteins S8 and S17. May interact with IF1 in the 30S initiation complex.

With S4 and S5 plays an important role in translational accuracy. In terms of biological role, interacts with and stabilizes bases of the 16S rRNA that are involved in tRNA selection in the A site and with the mRNA backbone. Located at the interface of the 30S and 50S subunits, it traverses the body of the 30S subunit contacting proteins on the other side and probably holding the rRNA structure together. The combined cluster of proteins S8, S12 and S17 appears to hold together the shoulder and platform of the 30S subunit. The chain is Small ribosomal subunit protein uS12 from Ruegeria pomeroyi (strain ATCC 700808 / DSM 15171 / DSS-3) (Silicibacter pomeroyi).